The sequence spans 555 residues: Glutamine--tRNA ligase (555 aa).

A 'HIGH' region motif is present at residues 34–44; sequence PEPNGYLHIGH. ATP contacts are provided by residues 35–37 and 41–47; these read EPN and HIGHAKS. L-glutamine-binding residues include Asp-67 and Tyr-212. ATP is bound by residues Thr-231, 261-262, and 269-271; these read RL and MSK. Residues 268 to 272 carry the 'KMSKS' region motif; it reads VMSKR.

This sequence belongs to the class-I aminoacyl-tRNA synthetase family. In terms of assembly, monomer.

The protein resides in the cytoplasm. It carries out the reaction tRNA(Gln) + L-glutamine + ATP = L-glutaminyl-tRNA(Gln) + AMP + diphosphate. This Proteus mirabilis (strain HI4320) protein is Glutamine--tRNA ligase.